Consider the following 68-residue polypeptide: Neuronal regeneration-related protein (68 aa).

The tract at residues 21 to 54 (MEGRLPKGRLPVPKEVNRKKNDETNAASLTPLGS) is disordered. Polar residues predominate over residues 44-54 (TNAASLTPLGS).

Interacts with the latency-associated peptides (LAP) of TGFB1 and TGFB2; the interaction results in a decrease in TGFB autoinduction. Interacts with FLNA. In terms of processing, phosphorylated on Ser-59. Phosphorylation decreases stability and activity.

The protein resides in the cytoplasm. May have roles in neural function and cellular differentiation. Ectopic expression promotes axonal regeneration, induces differentiation of fibroblast into myofibroblast, induces myofibroblast ameboid migration, augments motility of gliomas, and increases retinoic-acid regulation of lipid-droplet biogenesis. Down-regulates the expression of TGFB1 and TGFB2 but not of TGFB3. May play a role in the regulation of alveolar generation. The protein is Neuronal regeneration-related protein (NREP) of Macaca fascicularis (Crab-eating macaque).